A 1587-amino-acid polypeptide reads, in one-letter code: MSDADPFDMSDDDDNSVLSHTPPKKQKKAPTTKKGGSKPLADVENESFMDGIEESNNQDKDTNVSEKYQKLTQLEHIIKRPDTYVGSTERTTQHMWVYSSESEGMEYREVSYVPGLYKIFDEIVVNAADNKQNDKNMDEIRVTIDRESGEISVWNNGRGIPIEMHSKEKMYVPELIFGHLLTSSNYDDTQMKVTGGRNGFGAKLCNVFSTEFTIETQDSRQKKKYKQTWTENMTKMGKAKITDAKGADYTKVTFKPDYAKFGMTGMDDDFEALVKRRVYDLAGTAKVAVKLNGSRIPIRNFKMYMEMYTKAIRRERGDMGPAGKNEIITCSPDPRWEVGFAVSDGAFQQVSFVNSIAITSGGTHVNYIADQICSKLAEQVKKKNKNGATLKPAQIRNHIFIFVNALIVNPAFTSQTKEQLTTKQSQFGSKCVLEEDFYKKILKTEVMTNILHFAQQKADQMLKKTDGGRRSRMNNPKLTDANKAGTKEGHHCTLILTEGDSAKGLAMAGRAVVGPDLFGVFPLRGKLLNVRDASFDQIAKNQEIQNIKNFIGLQHKKEYTDTRGLRYGHLMITTDQDHDGSHIKGLLINFLQAQFPSLLKIPEFLIEFITPIVKVWKGDPKNPTKQRSFFTMPEYEAWKEEHGHERGWEHKYYKGLGTSTTEDAQIYFRDLDRHLKEFHTMQDNEVELIELAFSKKKADERKGNVRQFRPGTFLDHSVDKITYTDFINKELILFSMADNIRSIPSVVDGLKPGQRKVLYTCFRRNLKKDMKVVELAGHVSGTTAYQHGEGSLQQTIVGLAQTFVGSNNVNCLEPSGNFGSRLQGGADCASARYIYTRLWPFARRVFHNHDDPLLTYNEDDGAKIEQEVYVPVVPMILINGADGIGTGWSSSTPNYNPEDIVENLKRMMDGEPLKPMQPWFRGFTGEVTAVGQDRFKFSGIIKETGDKEVEITELPIRTWTQDFKDKLEDIIKAEKTPSFIKDYKDYNTHTKVHFVIQMDEKHMKTAIAEGLEEKFKLSKTMTTTNLVAFDPERITKYASVEDIMKEFYAVRLKYYERRKQYQLSEMQKELDKLSNQARFVQMIIDGKLVISKKKKAVLVAELKEKDFKPFPKVKEAVKAGETEPVVEEEEDSESGDTEVLSNSYDYLLGMPIWSLTQERVEKLRRQIGDKELEIDTLIKLSKEDIWKRDLEDFINEWRFQNDEEARRQRKVANMGRRTSSKLMTTGRGGGAAARKRKAALGDDPDDEDFAAPKSKKSAAAKKTESKGGGLLSFLGKSSAKPKPSPADGGDSDDDFDMEIMPKKSRGAPKSEPKADPKPKDEDEDIVMEDSDIEEIIPKKSRGSSKPSVKPESEDGQAKIAEAPKRGRAAAKPKPKPKSEDEEDELDDDDFMEITKAEAAKPSAQPARSGRKTTKYAELSDSDSDNGDDLLGDVSKMVKGIGSTNGASTSDSRLLFSERSRPGSSAGLKTTASKASKPSEFDADETDYSKLVPSNTPRRSLQVKPKDAKVSDDNEPEDDDDEPVKPAAKGKAAAKGKSTAAAANQLLQRLVVGRRKMLPKPPPRLPCPLPQRRTHRSNPRPRRPRRRS.

Positions 1 to 15 (MSDADPFDMSDDDDN) are enriched in acidic residues. The tract at residues 1 to 47 (MSDADPFDMSDDDDNSVLSHTPPKKQKKAPTTKKGGSKPLADVENES) is disordered. The segment covering 22–31 (PPKKQKKAPT) has biased composition (basic residues). ATP is bound by residues Asn126, Asn155, 183–185 (SSN), and 196–203 (GRNGFGAK). Interaction with DNA stretches follow at residues 381–383 (KKK) and 381–386 (KKKNKN). 415-417 (QTK) lines the ATP pocket. Residues 461 to 485 (MLKKTDGGRRSRMNNPKLTDANKAG) are disordered. Positions 492-606 (CTLILTEGDS…SLLKIPEFLI (115 aa)) constitute a Toprim domain. Glu498, Asp575, and Asp577 together coordinate Mg(2+). In terms of domain architecture, Topo IIA-type catalytic spans 743 to 1190 (IPSVVDGLKP…SKEDIWKRDL (448 aa)). Tyr833 functions as the O-(5'-phospho-DNA)-tyrosine intermediate in the catalytic mechanism. The interaction with DNA stretch occupies residues 1016–1025 (KLSKTMTTTN). A disordered region spans residues 1204 to 1587 (EARRQRKVAN…PRPRRPRRRS (384 aa)). Positions 1271 to 1280 (LSFLGKSSAK) are enriched in low complexity. A compositionally biased stretch (basic and acidic residues) spans 1308–1320 (PKSEPKADPKPKD). Positions 1321-1334 (EDEDIVMEDSDIEE) are enriched in acidic residues. A compositionally biased stretch (basic and acidic residues) spans 1348–1364 (VKPESEDGQAKIAEAPK). The span at 1365–1375 (RGRAAAKPKPK) shows a compositional bias: basic residues. Acidic residues-rich tracts occupy residues 1379-1391 (EDEEDELDDDDFM) and 1419-1430 (SDSDSDNGDDLL). 2 stretches are compositionally biased toward polar residues: residues 1441–1451 (GSTNGASTSDS) and 1466–1475 (GLKTTASKAS). The segment covering 1512-1521 (DNEPEDDDDE) has biased composition (acidic residues). The segment covering 1524 to 1542 (KPAAKGKAAAKGKSTAAAA) has biased composition (low complexity). Residues 1558 to 1568 (PKPPPRLPCPL) show a composition bias toward pro residues. Positions 1571–1587 (RRTHRSNPRPRRPRRRS) are enriched in basic residues.

Belongs to the type II topoisomerase family. As to quaternary structure, homodimer. The cofactor is Mg(2+). It depends on Mn(2+) as a cofactor. Ca(2+) serves as cofactor.

It localises to the nucleus. It carries out the reaction ATP-dependent breakage, passage and rejoining of double-stranded DNA.. In terms of biological role, control of topological states of DNA by transient breakage and subsequent rejoining of DNA strands. Topoisomerase II makes double-strand breaks. This is DNA topoisomerase 2 (TOP2) from Penicillium chrysogenum (Penicillium notatum).